Reading from the N-terminus, the 1024-residue chain is Error-prone DNA polymerase (1024 aa).

It belongs to the DNA polymerase type-C family. DnaE2 subfamily.

It localises to the cytoplasm. It catalyses the reaction DNA(n) + a 2'-deoxyribonucleoside 5'-triphosphate = DNA(n+1) + diphosphate. DNA polymerase involved in damage-induced mutagenesis and translesion synthesis (TLS). It is not the major replicative DNA polymerase. The sequence is that of Error-prone DNA polymerase from Vibrio vulnificus (strain CMCP6).